A 554-amino-acid chain; its full sequence is Protein PNS1 (554 aa).

Low complexity-rich tracts occupy residues 1-19 (MSGPQYGAQPGGYYNNNNN) and 27-45 (SYQMNPMPTDGNYGQQPQY). The segment at 1–90 (MSGPQYGAQP…TDGYGGPPPS (90 aa)) is disordered. Residues 1–105 (MSGPQYGAQP…KVQKPKYNDW (105 aa)) are Cytoplasmic-facing. Positions 68-90 (PQGPPPNGSKPPPTDGYGGPPPS) are enriched in pro residues. A helical membrane pass occupies residues 106-126 (WAGLLFLATVAGFVAVSAISI). The Extracellular portion of the chain corresponds to 127-153 (HGYADNRSQNNGSLNGQRNTFGLTTHT). Asparagine 132 and asparagine 137 each carry an N-linked (GlcNAc...) asparagine glycan. Residues 154 to 174 (IYLFVWVLICAIVLSYAYMWM) traverse the membrane as a helical segment. Over 175–181 (ARKFTKQ) the chain is Cytoplasmic. Residues 182-202 (FIYATGILNIVMGLVTALYML) traverse the membrane as a helical segment. At 203-206 (SRKY) the chain is on the extracellular side. A helical transmembrane segment spans residues 207-227 (WSGGIVFLIFVVLQALFFWSC). The Cytoplasmic segment spans residues 228 to 255 (RSRIPFSTLMLQTAIDVSKVHGHVYLVS). Residues 256 to 276 (AVGGVIGTLFAAYWAITLVAV) traverse the membrane as a helical segment. At 277 to 297 (YVKFEPDPNNAACRNAGGCSS) the chain is on the extracellular side. Residues 298–318 (GKVIGLIVFITFAGYWISEWL) traverse the membrane as a helical segment. Residues 319 to 352 (KNTIHTTVAGIYGSWYFNSRNYPTKVTRGALKRS) are Cytoplasmic-facing. A helical transmembrane segment spans residues 353-373 (LTYSFGSISLGSLFIAIINLI). Topologically, residues 374 to 389 (RQLAQAAQQNAAQEGD) are extracellular. The helical transmembrane segment at 390-410 (ILGTILWCIFGCLIGILDWLV) threads the bilayer. At 411 to 451 (EFINRYAFCHIALYGKAYFAAAKDTWKMVKDRGIDALINEC) the chain is on the cytoplasmic side. The helical transmembrane segment at 452–472 (LIGPVLTFGATFVAYACGLIA) threads the bilayer. At 473-487 (YLYMVYTKPAYNDGG) the chain is on the extracellular side. A helical transmembrane segment spans residues 488-508 (GFTPVVVAFAFLIGLQVCNVF). The Cytoplasmic portion of the chain corresponds to 509–554 (TTPLTSGIDTIFVAMAWDPEVLMRDHPDLYHRMVQVYPHVQEAIHA).

The protein belongs to the CTL (choline transporter-like) family.

The protein resides in the cell membrane. Its function is as follows. Probably involved in transport through the plasma membrane. This chain is Protein PNS1 (pns-1), found in Neurospora crassa (strain ATCC 24698 / 74-OR23-1A / CBS 708.71 / DSM 1257 / FGSC 987).